The chain runs to 286 residues: ATP synthase gamma chain (286 aa).

It belongs to the ATPase gamma chain family. In terms of assembly, F-type ATPases have 2 components, CF(1) - the catalytic core - and CF(0) - the membrane proton channel. CF(1) has five subunits: alpha(3), beta(3), gamma(1), delta(1), epsilon(1). CF(0) has three main subunits: a, b and c.

It localises to the cell inner membrane. Its function is as follows. Produces ATP from ADP in the presence of a proton gradient across the membrane. The gamma chain is believed to be important in regulating ATPase activity and the flow of protons through the CF(0) complex. The protein is ATP synthase gamma chain of Shewanella oneidensis (strain ATCC 700550 / JCM 31522 / CIP 106686 / LMG 19005 / NCIMB 14063 / MR-1).